Consider the following 140-residue polypeptide: Cytochrome c-type biogenesis protein CcmE (140 aa).

The Cytoplasmic portion of the chain corresponds to 1-7 (MTKRQNR). Residues 8-28 (MVLVALLVIGVSLAGYLGLKA) traverse the membrane as a helical; Signal-anchor for type II membrane protein segment. The Periplasmic segment spans residues 29–140 (FNENLLYFLS…DALEKAKNKQ (112 aa)). Heme-binding residues include H120 and Y124.

This sequence belongs to the CcmE/CycJ family.

It is found in the cell inner membrane. In terms of biological role, heme chaperone required for the biogenesis of c-type cytochromes. Transiently binds heme delivered by CcmC and transfers the heme to apo-cytochromes in a process facilitated by CcmF and CcmH. In Vesicomyosocius okutanii subsp. Calyptogena okutanii (strain HA), this protein is Cytochrome c-type biogenesis protein CcmE.